Reading from the N-terminus, the 167-residue chain is Probable membrane-bound hydrogenase subunit mbhJ (167 aa).

Cysteine 35, cysteine 38, cysteine 102, and cysteine 132 together coordinate [4Fe-4S] cluster.

Belongs to the complex I 20 kDa subunit family. In terms of assembly, the membrane-bound hydrogenase complex is composed of MbhK and MbhL, but may also contain MbhJ. [4Fe-4S] cluster is required as a cofactor.

The protein localises to the cell membrane. It catalyses the reaction H2 + 2 oxidized [2Fe-2S]-[ferredoxin] = 2 reduced [2Fe-2S]-[ferredoxin] + 2 H(+). With respect to regulation, inhibited by 0.1 mM Cu(2+). Its function is as follows. Probable subunit of a hydrogen-evolving hydrogenase that utilizes protons both as a substrate for hydrogen production and proton translocation. Acts by coupling the redox reaction via ferredoxin and iron-sulfur (Fe-S) clusters to proton translocation across the membrane, thereby conserving the redox energy in a proton gradient. This Pyrococcus furiosus (strain ATCC 43587 / DSM 3638 / JCM 8422 / Vc1) protein is Probable membrane-bound hydrogenase subunit mbhJ.